A 120-amino-acid chain; its full sequence is MILQQPLERGPPSRDPRATTGVTRGLNASLSPREPLHKQFLSEENMATHFSRLSLHNDHPYCSPPVTFPEALPPLRSPCPELLLWRYPGSLIPEALRLLRLGDTPSPYYPASPAGDIVEL.

The tract at residues 1–30 (MILQQPLERGPPSRDPRATTGVTRGLNASL) is disordered. Residues 20–30 (TGVTRGLNASL) show a composition bias toward polar residues. Positions 58–61 (DHPY) are interaction with HCFC1. Positions 92-101 (IPEALRLLRL) match the Nuclear export signal motif.

Interacts with HCFC1.

The protein resides in the cytoplasm. It is found in the nucleus. Functionally, regulates HCFC1 activity by modulating its subcellular localization. Overexpression of HCFC1R1 leads to accumulation of HCFC1 in the cytoplasm. HCFC1R1-mediated export may provide the pool of cytoplasmic HCFC1 required for import of virion-derived VP16 into the nucleus. The chain is Host cell factor C1 regulator 1 (Hcfc1r1) from Mus musculus (Mouse).